Here is a 1428-residue protein sequence, read N- to C-terminus: DNA-directed RNA polymerase subunit beta' (1428 aa).

The Zn(2+) site is built by cysteine 66, cysteine 68, cysteine 81, and cysteine 84. The Mg(2+) site is built by aspartate 472, aspartate 474, and aspartate 476. Positions 816, 890, 897, and 900 each coordinate Zn(2+).

The protein belongs to the RNA polymerase beta' chain family. As to quaternary structure, the RNAP catalytic core consists of 2 alpha, 1 beta, 1 beta' and 1 omega subunit. When a sigma factor is associated with the core the holoenzyme is formed, which can initiate transcription. Mg(2+) serves as cofactor. It depends on Zn(2+) as a cofactor.

It catalyses the reaction RNA(n) + a ribonucleoside 5'-triphosphate = RNA(n+1) + diphosphate. Its function is as follows. DNA-dependent RNA polymerase catalyzes the transcription of DNA into RNA using the four ribonucleoside triphosphates as substrates. The polypeptide is DNA-directed RNA polymerase subunit beta' (Phocaeicola vulgatus (strain ATCC 8482 / DSM 1447 / JCM 5826 / CCUG 4940 / NBRC 14291 / NCTC 11154) (Bacteroides vulgatus)).